Consider the following 462-residue polypeptide: Steroidogenic factor 1 (462 aa).

The segment at residues 10–85 is a DNA-binding region (nuclear receptor); the sequence is DELCPVCGDK…VGMRLEAVRA (76 aa). The NR C4-type zinc finger occupies 13-33; it reads CPVCGDKVSGYHYGLLTCESC. Residues lysine 34, lysine 38, and lysine 72 each carry the N6-acetyllysine modification. The NR C4-type zinc finger occupies 49–73; that stretch reads CTESQSCKIDKTQRKRCPFCRFQKC. Positions 117 to 149 are disordered; it reads GFKLETGPPMGVPPPPPPPPDYMLPPSLHAPEP. Residue lysine 119 forms a Glycyl lysine isopeptide (Lys-Gly) (interchain with G-Cter in SUMO) linkage. Over residues 126 to 139 the composition is skewed to pro residues; it reads MGVPPPPPPPPDYM. Lysine 194 participates in a covalent cross-link: Glycyl lysine isopeptide (Lys-Gly) (interchain with G-Cter in SUMO). Position 203 is a phosphoserine; by CDK7 (serine 203). In terms of domain architecture, NR LBD spans 223-460; the sequence is NVPELILQLL…NLLIEMLQAK (238 aa). The a 1,2-diacyl-sn-glycero-3-phosphocholine site is built by glycine 342, tyrosine 437, and lysine 441.

It belongs to the nuclear hormone receptor family. NR5 subfamily. In terms of assembly, binds DNA as a monomer. Part of a complex consisting of SFPQ, NONO and NR5A1. Interacts with NR0B2, NCOA2 and PPARGC1A. Interacts with DGKQ and CDK7. Binds to and activated by HIPK3. In terms of processing, acetylation stimulates the transcriptional activity. Post-translationally, sumoylation reduces CDK7-mediated phosphorylation on Ser-203. Phosphorylated on Ser-203 by CDK7. This phosphorylation promotes transcriptional activity.

It is found in the nucleus. Transcriptional activator. Seems to be essential for sexual differentiation and formation of the primary steroidogenic tissues. Binds to the Ad4 site found in the promoter region of steroidogenic P450 genes such as CYP11A, CYP11B and CYP21B. Also regulates the AMH/Muellerian inhibiting substance gene as well as the AHCH and STAR genes. 5'-YCAAGGYC-3' and 5'-RRAGGTCA-3' are the consensus sequences for the recognition by NR5A1. The SFPQ-NONO-NR5A1 complex binds to the CYP17 promoter and regulates basal and cAMP-dependent transcriptional activity. Binds phosphatidylcholine and phospholipids with a phosphatidylinositol (PI) headgroup, in particular PI(3,4)P2 and PI(3,4,5)P3. Activated by the phosphorylation of NR5A1 by HIPK3 leading to increased steroidogenic gene expression upon cAMP signaling pathway stimulation. The polypeptide is Steroidogenic factor 1 (Nr5a1) (Rattus norvegicus (Rat)).